The sequence spans 268 residues: MIMSSYLMDSNYIDPKFPPCEEYSQNSYIPEHSPEYYSRARDSGYQHHHQELYPPRASYQERQYNCASIPEPDTQRGHGLPHAGHLLGKGQSASCEPPPLPLSPATPSAASSACNQATPEHPNSSASAKQPVVYPWMKKIHVSTVNSSYNGAEPKRSRTAYTRQQVLELEKEFHYNRYLTRRRRIEIAHSLVLSERQIKIWFQNRRMKWKKDHRLPNTKVRSSSSTGISSGSNTSSAAGVVAAASTTNTMSASEDLSGTERGEDITRL.

The disordered stretch occupies residues Pro70–Lys129. Low complexity-rich tracts occupy residues Gly77–Cys95 and Ala105–Cys114. The span at Asn115–Ala128 shows a compositional bias: polar residues. The Antp-type hexapeptide signature appears at Val133 to Lys138. A DNA-binding region (homeobox) is located at residues Pro154–His213. Positions Asp212–Leu268 are disordered. Positions Ser222–Ser253 are enriched in low complexity. Over residues Gly258–Leu268 the composition is skewed to basic and acidic residues.

This sequence belongs to the Antp homeobox family. Deformed subfamily.

It is found in the nucleus. Sequence-specific transcription factor which is part of a developmental regulatory system that provides cells with specific positional identities on the anterior-posterior axis. This chain is Homeobox protein Hox-C4a (hoxc4a), found in Danio rerio (Zebrafish).